The primary structure comprises 229 residues: Matrix protein (229 aa).

A compositionally biased stretch (low complexity) spans 1 to 10; sequence MSSLKKILGL. The segment at 1 to 23 is disordered; the sequence is MSSLKKILGLKGKGKKSKKLGIA. The short motif at 2 to 4 is the dynamin binding element; sequence SSL. The PPXY motif motif lies at 24-27; sequence PPPY. The short motif at 37–40 is the PTAP/PSAP motif element; that stretch reads PSAP.

Belongs to the vesiculoviruses matrix protein family. As to quaternary structure, homomultimer. Interacts with viral nucleocapsid; this interaction contributes to the virion assembly. Interacts with the viral envelope glycoprotein; this interaction contributes to the virion assembly. Interacts with host RAE1-NUP98 complex. Interacts with host NEDD4 and TSG101. Interacts with host dynamin. Interacts with host NDUFAF4; the interaction inhibits viral propagation and is independent of interferon activation. Interacts with host GTF2H5; the interaction may inhibit host transcription. Phosphorylated by host.

Its subcellular location is the virion. The protein localises to the host endomembrane system. It localises to the host nucleus membrane. It is found in the host nucleus. The protein resides in the host cytoplasm. In terms of biological role, forms a double layer around the helical nucleocapsid, the inner matrix layer binding to the N helix and the outer matrix layer binding to the envelope glycoprotein. Plays a major role in assembly and budding of virion, by recruiting cellular partners of the ESCRT complexes that play a key role in releasing the budding particle from the host membrane. Condensates the ribonucleocapsid core during virus assembly. Inhibits the host mRNA nuclear export thereby inducing the shut off of cellular transcription and preventing the interferon signaling and the establishment of antiviral state in infected cells. This shutoff presumably inhibits interferon signaling and thus establishment of antiviral state in virus infected cells. Induces cell-rounding, cytoskeleton disorganization and apoptosis in infected cell. Inhibits host transcription, possibly through interaction with host DNA repair factor IIH/TFIIH GTF2H5 subunit. The polypeptide is Matrix protein (M) (Aedes (Bovine)).